Consider the following 478-residue polypeptide: Dihydrolipoyl dehydrogenase (478 aa).

Residues 34–49 (EKYI…GGTC), lysine 58, and glycine 122 contribute to the FAD site. The cysteines at positions 49 and 54 are disulfide-linked. NAD(+) is bound by residues 188-192 (GAGVI), glutamate 211, valine 245, and 276-279 (AVGR). Residues aspartate 319 and alanine 327 each coordinate FAD. Catalysis depends on histidine 451, which acts as the Proton acceptor.

This sequence belongs to the class-I pyridine nucleotide-disulfide oxidoreductase family. In terms of assembly, homodimer. It depends on FAD as a cofactor.

Its subcellular location is the cytoplasm. It catalyses the reaction N(6)-[(R)-dihydrolipoyl]-L-lysyl-[protein] + NAD(+) = N(6)-[(R)-lipoyl]-L-lysyl-[protein] + NADH + H(+). Its function is as follows. The branched-chain alpha-keto dehydrogenase complex catalyzes the overall conversion of alpha-keto acids to acyl-CoA and CO(2). It contains multiple copies of 3 enzymatic components: branched-chain alpha-keto acid decarboxylase (E1), lipoamide acyltransferase (E2) and lipoamide dehydrogenase (E3). This chain is Dihydrolipoyl dehydrogenase (lpd), found in Pseudomonas fluorescens.